Here is a 335-residue protein sequence, read N- to C-terminus: Zinc-type alcohol dehydrogenase-like protein SAS2087 (335 aa).

The protein belongs to the zinc-containing alcohol dehydrogenase family. Quinone oxidoreductase subfamily.

The chain is Zinc-type alcohol dehydrogenase-like protein SAS2087 from Staphylococcus aureus (strain MSSA476).